A 462-amino-acid polypeptide reads, in one-letter code: Arginine-specific demethylase JMJ20 (462 aa).

A JmjC domain is found at 115-287 (VKEYPDYTAY…WVWDLLWKDY (173 aa)). Fe cation-binding residues include histidine 177, aspartate 179, and histidine 255.

The protein belongs to the JARID1 histone demethylase family. Requires Fe(2+) as cofactor. In terms of tissue distribution, mostly expressed in leaves, and, to a lower extent, in inflorescences, roots, siliques and stems.

It localises to the nucleus. The catalysed reaction is N(omega),N(omega)-dimethyl-L-arginyl-[protein] + 2-oxoglutarate + O2 = N(omega)-methyl-L-arginyl-[protein] + formaldehyde + succinate + CO2. In terms of biological role, histone demethylase that demethylates 'Arg-3' (H4R3me) of histone H4 with a specific activity for H4R3me2. Involved in the positive regulation of gene expression. Together with JMJ22, positively regulates seed germination by promoting the removal of repressive histone arginine methylations (e.g. H4R3me2) at GA3ox1 and GA3ox2 to trigger gibberellic acid (GA) biosynthesis. The polypeptide is Arginine-specific demethylase JMJ20 (Arabidopsis thaliana (Mouse-ear cress)).